We begin with the raw amino-acid sequence, 335 residues long: Transmembrane protein 120B-B (335 aa).

A coiled-coil region spans residues 1–39 (MSLQKCQEEWGELEKEFQQLQETHKVYKQKLEELSSLQN). Transmembrane regions (helical) follow at residues 100 to 116 (SLYL…TLLS), 130 to 150 (FKLY…FVLH), 157 to 177 (VFNF…SILI), 193 to 213 (VSTF…YQMF), 268 to 288 (FLLP…MTLF), and 300 to 320 (QVFV…LTTL).

The protein belongs to the TMEM120 family.

The protein localises to the nucleus inner membrane. Necessary for efficient adipogenesis. Does not show ion channel activity. The chain is Transmembrane protein 120B-B (tmem120b-b) from Xenopus laevis (African clawed frog).